A 429-amino-acid polypeptide reads, in one-letter code: Adenylosuccinate synthetase (429 aa).

Residues 12–18 (GDEGKGK) and 40–42 (GHT) contribute to the GTP site. The Proton acceptor role is filled by Asp13. Mg(2+) contacts are provided by Asp13 and Gly40. IMP contacts are provided by residues 13 to 16 (DEGK), 38 to 41 (NAGH), Thr128, Arg142, Gln223, Thr238, and Arg302. His41 (proton donor) is an active-site residue. 298 to 304 (TTTGRAR) is a binding site for substrate. Residues Arg304, 330 to 332 (SID), and 412 to 414 (SVG) each bind GTP.

It belongs to the adenylosuccinate synthetase family. As to quaternary structure, homodimer. It depends on Mg(2+) as a cofactor.

It is found in the cytoplasm. It carries out the reaction IMP + L-aspartate + GTP = N(6)-(1,2-dicarboxyethyl)-AMP + GDP + phosphate + 2 H(+). The protein operates within purine metabolism; AMP biosynthesis via de novo pathway; AMP from IMP: step 1/2. In terms of biological role, plays an important role in the de novo pathway of purine nucleotide biosynthesis. Catalyzes the first committed step in the biosynthesis of AMP from IMP. The sequence is that of Adenylosuccinate synthetase from Oceanobacillus iheyensis (strain DSM 14371 / CIP 107618 / JCM 11309 / KCTC 3954 / HTE831).